A 371-amino-acid chain; its full sequence is Chaperone protein DnaJ (371 aa).

The 65-residue stretch at Asp5–Gly69 folds into the J domain. The CR-type zinc finger occupies Gly133 to Arg215. The Zn(2+) site is built by Cys146, Cys149, Cys163, Cys166, Cys189, Cys192, Cys203, and Cys206. CXXCXGXG motif repeat units lie at residues Cys146–Gly153, Cys163–Gly170, Cys189–Gly196, and Cys203–Gly210.

It belongs to the DnaJ family. As to quaternary structure, homodimer. It depends on Zn(2+) as a cofactor.

It localises to the cytoplasm. Functionally, participates actively in the response to hyperosmotic and heat shock by preventing the aggregation of stress-denatured proteins and by disaggregating proteins, also in an autonomous, DnaK-independent fashion. Unfolded proteins bind initially to DnaJ; upon interaction with the DnaJ-bound protein, DnaK hydrolyzes its bound ATP, resulting in the formation of a stable complex. GrpE releases ADP from DnaK; ATP binding to DnaK triggers the release of the substrate protein, thus completing the reaction cycle. Several rounds of ATP-dependent interactions between DnaJ, DnaK and GrpE are required for fully efficient folding. Also involved, together with DnaK and GrpE, in the DNA replication of plasmids through activation of initiation proteins. This is Chaperone protein DnaJ from Bacillus cereus (strain G9842).